The following is a 204-amino-acid chain: VQ motif-containing protein 13 (204 aa).

Residues 1-12 (MEKSPRYRDKAK) show a composition bias toward basic and acidic residues. Residues 1 to 26 (MEKSPRYRDKAKNLLPSPSSCTTTPT) form a disordered region. Residues 16 to 26 (PSPSSCTTTPT) are compositionally biased toward low complexity. Residue Ser-17 is modified to Phosphoserine. The short motif at 46–55 (FKQVVQLLTG) is the VQ element. The interval 56-90 (IPKNPTHQPDPRFPPFHSIPPIKAVTNKKQSSSFR) is disordered. Residues Ser-73 and Ser-128 each carry the phosphoserine modification. Thr-131 carries the post-translational modification Phosphothreonine. The disordered stretch occupies residues 133–204 (LMSDPFYRPG…HSPAPSPHDH (72 aa)). Low complexity predominate over residues 143-152 (SFSQSPSDSK). 2 positions are modified to phosphoserine: Ser-147 and Ser-173. Thr-177 and Thr-192 each carry phosphothreonine. Phosphoserine is present on residues Ser-196 and Ser-200.

Post-translationally, phosphorylated on serine and threonine residues by MPK6.

Its subcellular location is the nucleus. Its function is as follows. May modulate WRKY transcription factor activities. The chain is VQ motif-containing protein 13 from Arabidopsis thaliana (Mouse-ear cress).